The primary structure comprises 864 residues: Mitochondrial 15S rRNA processing factor CCM1 (864 aa).

Residues 1–76 constitute a mitochondrion transit peptide; sequence MYMARCGPKN…REFSNTLKER (76 aa). 2 PPR repeats span residues 319-353 and 356-390; these read NKQNLTTVIQFYSRKEMTKQAWNTFDTMKFLSTKH and DICTYNTMLRICEKERNFPKALDLFQEIQDHNIKP.

Belongs to the CCM1 family. Binds to mitochondrial small subunit 15S rRNA.

It is found in the mitochondrion. Functionally, regulates mitochondrial small subunit maturation by controlling 15S rRNA 5'-end processing. Localizes to the 5' precursor of the 15S rRNA in a position that is subsequently occupied by mS47 in the mature yeast mtSSU. Uses structure and sequence-specific RNA recognition, binding to a single-stranded region of the precursor and specifically recognizing bases -6 to -1. The exchange of Ccm1 for mS47 is coupled to the irreversible removal of precursor rRNA that is accompanied by conformational changes of the mitoribosomal proteins uS5m and mS26. These conformational changes signal completion of 5'-end rRNA processing through protection of the mature 5'-end of the 15S rRNA and stabilization of mS47. The removal of the 5' precursor together with the dissociation of Ccm1 may be catalyzed by the 5'-3' exoribonuclease Pet127. Involved in the specific removal of group I introns in mitochondrial encoded transcripts. This Saccharomyces cerevisiae (strain JAY291) (Baker's yeast) protein is Mitochondrial 15S rRNA processing factor CCM1 (CCM1).